A 1067-amino-acid chain; its full sequence is Glycine--tRNA ligase, chloroplastic/mitochondrial 2 (1067 aa).

The transit peptide at 1-50 directs the protein to the chloroplast and mitochondrion; it reads MAILHFSLPLIVSFLRPHASPRFFLLPRSLSQSPFLSRRRFHRTSAVSSA. E513 is a substrate binding site. Residues 589–596, 619–624, 744–745, and 859–862 each bind ATP; these read RNSGINIE, LVVPQN, RL, and GLRR. 624 to 628 is a substrate binding site; it reads NLLNE. 855-859 contacts substrate; the sequence is NDPFG.

This sequence belongs to the class-II aminoacyl-tRNA synthetase family. In terms of assembly, homodimer.

The protein resides in the plastid. It is found in the chloroplast. The protein localises to the mitochondrion. The enzyme catalyses tRNA(Gly) + glycine + ATP = glycyl-tRNA(Gly) + AMP + diphosphate. In terms of biological role, catalyzes the attachment of glycine to tRNA(Gly). Is also able produce diadenosine tetraphosphate (Ap4A), a universal pleiotropic signaling molecule needed for cell regulation pathways, by direct condensation of 2 ATPs. This chain is Glycine--tRNA ligase, chloroplastic/mitochondrial 2, found in Arabidopsis thaliana (Mouse-ear cress).